The primary structure comprises 297 residues: UDP-3-O-acyl-N-acetylglucosamine deacetylase (297 aa).

Zn(2+)-binding residues include His-77, His-236, and Asp-240. Residue His-263 is the Proton donor of the active site.

This sequence belongs to the LpxC family. Zn(2+) is required as a cofactor.

The enzyme catalyses a UDP-3-O-[(3R)-3-hydroxyacyl]-N-acetyl-alpha-D-glucosamine + H2O = a UDP-3-O-[(3R)-3-hydroxyacyl]-alpha-D-glucosamine + acetate. Its pathway is glycolipid biosynthesis; lipid IV(A) biosynthesis; lipid IV(A) from (3R)-3-hydroxytetradecanoyl-[acyl-carrier-protein] and UDP-N-acetyl-alpha-D-glucosamine: step 2/6. Its function is as follows. Catalyzes the hydrolysis of UDP-3-O-myristoyl-N-acetylglucosamine to form UDP-3-O-myristoylglucosamine and acetate, the committed step in lipid A biosynthesis. This chain is UDP-3-O-acyl-N-acetylglucosamine deacetylase, found in Psychrobacter sp. (strain PRwf-1).